The chain runs to 314 residues: Thymidylate synthase (314 aa).

DUMP-binding positions include R21 and 176-177 (RR). C196 (nucleophile) is an active-site residue. DUMP contacts are provided by residues 216–219 (RSAD), N227, and 257–259 (HLY). D219 is a binding site for (6R)-5,10-methylene-5,6,7,8-tetrahydrofolate. S313 contributes to the (6R)-5,10-methylene-5,6,7,8-tetrahydrofolate binding site.

The protein belongs to the thymidylate synthase family. Bacterial-type ThyA subfamily. In terms of assembly, homodimer.

It localises to the cytoplasm. It carries out the reaction dUMP + (6R)-5,10-methylene-5,6,7,8-tetrahydrofolate = 7,8-dihydrofolate + dTMP. Its pathway is pyrimidine metabolism; dTTP biosynthesis. In terms of biological role, catalyzes the reductive methylation of 2'-deoxyuridine-5'-monophosphate (dUMP) to 2'-deoxythymidine-5'-monophosphate (dTMP) while utilizing 5,10-methylenetetrahydrofolate (mTHF) as the methyl donor and reductant in the reaction, yielding dihydrofolate (DHF) as a by-product. This enzymatic reaction provides an intracellular de novo source of dTMP, an essential precursor for DNA biosynthesis. The sequence is that of Thymidylate synthase from Listeria monocytogenes serovar 1/2a (strain ATCC BAA-679 / EGD-e).